Here is a 602-residue protein sequence, read N- to C-terminus: NAD-dependent protein deacetylase sir-2.1 (602 aa).

A disordered region spans residues 25–57; the sequence is PEIETMHIENSVEGESGRQRTESTASVNSESWQ. A compositionally biased stretch (polar residues) spans 46-57; sequence ESTASVNSESWQ. The 256-residue stretch at 119–374 folds into the Deacetylase sirtuin-type domain; sequence KLFTYNSLSD…RDICYALGGS (256 aa). NAD(+) contacts are provided by residues 144 to 163 and 228 to 231; these read GAGV…DGIY and QNID. Residue His-246 is the Proton acceptor of the active site. Zn(2+) contacts are provided by Cys-254, Cys-257, Cys-278, and Cys-281. Residues 318–320, 343–345, and Cys-360 contribute to the NAD(+) site; these read GSS and NRE. 2 disordered regions span residues 411–468 and 520–551; these read QERR…SDEV and RNRH…RSQS.

It belongs to the sirtuin family. Class I subfamily. Interacts with ftt-2 and par-5. Interacts with daf-16 following heat-shock, which causes daf-16 to accumulate in the nucleus. Interaction with daf-16 is promoted by ftt-2. The cofactor is Zn(2+).

The protein resides in the nucleus. The enzyme catalyses N(6)-acetyl-L-lysyl-[protein] + NAD(+) + H2O = 2''-O-acetyl-ADP-D-ribose + nicotinamide + L-lysyl-[protein]. In terms of biological role, NAD-dependent deacetylase. Required for a reduction of the 'Lys-16' acetylation of histone H4 (H4K16ac) on dosage-compensated X chromosomes in hermaphrodites. Functions upstream of daf-16 in the insulin-like signaling pathway, promoting daf-16 mediated transcriptional activation and increased life-span. May also regulate life-span independently of daf-16 by modulating the transcription of genes involved in the stress response of the endoplasmic reticulum (ER). Acts upstream of the nicotinic acid metabolism pathway, which may be linked to the regulation of longevity. Plays a role in ascaroside-mediated longevity and stress resistance. This Caenorhabditis briggsae protein is NAD-dependent protein deacetylase sir-2.1 (sir-2.1).